A 47-amino-acid chain; its full sequence is PhoP/PhoQ regulator MgrB (47 aa).

The helical transmembrane segment at 6-26 threads the bilayer; the sequence is WVLLIVIIAGCLLLWTQMLNV.

This sequence belongs to the MgrB family. May form homooligomers. Probably interacts with the periplasmic domain of PhoQ.

The protein localises to the cell inner membrane. Its function is as follows. PhoP-regulated transcription is redox-sensitive, being activated when the periplasm becomes more reducing. MgrB acts between DsbA/DsbB and PhoP/PhoQ in this pathway. Represses PhoP/PhoQ signaling, possibly by binding to the periplasmic domain of PhoQ, altering its activity and that of downstream effector PhoP. This chain is PhoP/PhoQ regulator MgrB, found in Klebsiella pneumoniae (strain 342).